The following is a 967-amino-acid chain: Leucine-rich repeat-containing G-protein coupled receptor 6 (967 aa).

The N-terminal stretch at 1–24 is a signal peptide; it reads MPSPPGLRALWLCAALCASRRAGG. At 25 to 567 the chain is on the extracellular side; it reads APQPGPGPTA…LFESWGIRLA (543 aa). Residues 26 to 66 enclose the LRRNT domain; that stretch reads PQPGPGPTACPAPCHCQEDGIMLSADCSELGLSAVPGDLDP. A glycan (N-linked (GlcNAc...) asparagine) is linked at N77. LRR repeat units follow at residues 91–112, 115–136, 139–160, 163–186, 187–208, 211–232, 235–256, 258–279, 282–303, 306–328, 329–350, 353–374, 375–396, 399–420, and 423–443; these read FLEE…AFSG, SLKI…ALWE, SLQS…SFEG, SLRH…NNLP, ALQA…AFQN, SLVV…SFEG, NLET…IRTL, RLQE…AFMG, LLQT…AFQY, KLHT…KGTT, SLEI…MCQQ, RLRV…HRCQ, KLEE…TFSQ, SLQA…AFST, and SLVK…AGLG. N208 carries N-linked (GlcNAc...) asparagine glycosylation. Residues 568–588 form a helical membrane-spanning segment; sequence VWAIVLLSVLCNGLVLLTVFA. At 589–598 the chain is on the cytoplasmic side; it reads GGPVPLPPVK. A helical transmembrane segment spans residues 599-619; sequence FVVGAIAGANTLTGISCGLLA. Residues 620–644 lie on the Extracellular side of the membrane; the sequence is SVDALTFGQFSEYGARWETGLGCRA. A disulfide bond links C642 and C717. A helical transmembrane segment spans residues 645 to 665; the sequence is TGFLAVLGSEASVLLLTLAAV. Topologically, residues 666 to 687 are cytoplasmic; that stretch reads QCSVSVSCVRAYGKSPSLGSVR. Residues 688–708 traverse the membrane as a helical segment; sequence AGVLGCLALAGLAAALPLASV. The Extracellular portion of the chain corresponds to 709–727; it reads GEYGASPLCLPYAPPEGQP. Residues 728–748 traverse the membrane as a helical segment; it reads AALGFTVALVMMNSFCFLVVA. The Cytoplasmic segment spans residues 749 to 774; that stretch reads GAYIKLYCDLPRGDFEAVWDCAMVRH. A helical transmembrane segment spans residues 775 to 795; the sequence is VAWLIFADGLLYCPVAFLSFA. Residues 796–809 lie on the Extracellular side of the membrane; it reads SMLGLFPVTPEAVK. The helical transmembrane segment at 810-830 threads the bilayer; sequence SVLLVVLPLPACLNPLLYLLF. The Cytoplasmic portion of the chain corresponds to 831–967; the sequence is NPHFRDDLRR…PSGLAFASHV (137 aa).

This sequence belongs to the G-protein coupled receptor 1 family.

It is found in the cell membrane. Its function is as follows. Receptor for R-spondins that potentiates the canonical Wnt signaling pathway and acts as a marker of multipotent stem cells in the epidermis. Upon binding to R-spondins (RSPO1, RSPO2, RSPO3 or RSPO4), associates with phosphorylated LRP6 and frizzled receptors that are activated by extracellular Wnt receptors, triggering the canonical Wnt signaling pathway to increase expression of target genes. In contrast to classical G-protein coupled receptors, does not activate heterotrimeric G-proteins to transduce the signal. May act as a tumor suppressor. The polypeptide is Leucine-rich repeat-containing G-protein coupled receptor 6 (LGR6) (Homo sapiens (Human)).